The primary structure comprises 379 residues: DNA replication and repair protein RecF (379 aa).

30 to 37 (GKNAQGKT) is an ATP binding site.

Belongs to the RecF family.

The protein localises to the cytoplasm. Its function is as follows. The RecF protein is involved in DNA metabolism; it is required for DNA replication and normal SOS inducibility. RecF binds preferentially to single-stranded, linear DNA. It also seems to bind ATP. In Ligilactobacillus salivarius (strain UCC118) (Lactobacillus salivarius), this protein is DNA replication and repair protein RecF.